Here is a 376-residue protein sequence, read N- to C-terminus: Adipocyte plasma membrane-associated protein (376 aa).

The helical transmembrane segment at 1-17 (MTFLMLAVSLAIPLLGA) threads the bilayer. A glycan (N-linked (GlcNAc...) asparagine) is linked at asparagine 120.

The protein belongs to the strictosidine synthase family.

Its subcellular location is the membrane. Functionally, exhibits strong arylesterase activity with beta-naphthyl acetate and phenyl acetate. May play a role in adipocyte differentiation. This chain is Adipocyte plasma membrane-associated protein (Apmap), found in Rattus norvegicus (Rat).